Here is an 87-residue protein sequence, read N- to C-terminus: U3-theraphotoxin-Cg1b (87 aa).

An N-terminal signal peptide occupies residues 1 to 23 (MRTLTLIAIVTCAALVIFHAAAA). Residues 24-48 (EELEAQDVIQPEDIFTGVATLEEDR) constitute a propeptide that is removed on maturation. 3 disulfide bridges follow: Cys52–Cys65, Cys56–Cys79, and Cys73–Cys84.

Belongs to the neurotoxin 12 (Hwtx-2) family. 03 (juruin) subfamily. As to expression, expressed by the venom gland.

It is found in the secreted. Functionally, probable ion channel inhibitor. The chain is U3-theraphotoxin-Cg1b from Chilobrachys guangxiensis (Chinese earth tiger tarantula).